A 595-amino-acid polypeptide reads, in one-letter code: DNA primase (595 aa).

The segment at 38–62 adopts a CHC2-type zinc-finger fold; sequence CPFHDEKTPSFIVYPTRGHYHCYGC. Positions 251–331 constitute a Toprim domain; the sequence is RRVILVEGQA…GITAIVCRLP (81 aa). Glu-257, Asp-302, and Asp-304 together coordinate Mg(2+). Residues 430-441 show a composition bias toward basic and acidic residues; it reads KGKKVSAKEPSS. The tract at residues 430 to 451 is disordered; the sequence is KGKKVSAKEPSSESKQTSTEGK.

This sequence belongs to the DnaG primase family. As to quaternary structure, monomer. Interacts with DnaB. It depends on Zn(2+) as a cofactor. The cofactor is Mg(2+).

It catalyses the reaction ssDNA + n NTP = ssDNA/pppN(pN)n-1 hybrid + (n-1) diphosphate.. RNA polymerase that catalyzes the synthesis of short RNA molecules used as primers for DNA polymerase during DNA replication. This Chlamydia trachomatis serovar D (strain ATCC VR-885 / DSM 19411 / UW-3/Cx) protein is DNA primase.